The following is an 807-amino-acid chain: Glycerol-3-phosphate acyltransferase (807 aa).

Residues Cys305–Met310 carry the HXXXXD motif motif.

This sequence belongs to the GPAT/DAPAT family.

The protein resides in the cell inner membrane. It catalyses the reaction sn-glycerol 3-phosphate + an acyl-CoA = a 1-acyl-sn-glycero-3-phosphate + CoA. The protein operates within phospholipid metabolism; CDP-diacylglycerol biosynthesis; CDP-diacylglycerol from sn-glycerol 3-phosphate: step 1/3. This is Glycerol-3-phosphate acyltransferase from Vibrio atlanticus (strain LGP32) (Vibrio splendidus (strain Mel32)).